The sequence spans 312 residues: 4-hydroxy-3-methylbut-2-enyl diphosphate reductase (312 aa).

[4Fe-4S] cluster is bound at residue cysteine 14. Residues histidine 43 and histidine 76 each coordinate (2E)-4-hydroxy-3-methylbut-2-enyl diphosphate. Dimethylallyl diphosphate is bound by residues histidine 43 and histidine 76. Residues histidine 43 and histidine 76 each coordinate isopentenyl diphosphate. Cysteine 98 provides a ligand contact to [4Fe-4S] cluster. Residue histidine 125 coordinates (2E)-4-hydroxy-3-methylbut-2-enyl diphosphate. Position 125 (histidine 125) interacts with dimethylallyl diphosphate. Histidine 125 is a binding site for isopentenyl diphosphate. The active-site Proton donor is the glutamate 127. Residue threonine 165 participates in (2E)-4-hydroxy-3-methylbut-2-enyl diphosphate binding. Cysteine 195 lines the [4Fe-4S] cluster pocket. (2E)-4-hydroxy-3-methylbut-2-enyl diphosphate contacts are provided by serine 223, serine 224, asparagine 225, and serine 269. Positions 223, 224, 225, and 269 each coordinate dimethylallyl diphosphate. Serine 223, serine 224, asparagine 225, and serine 269 together coordinate isopentenyl diphosphate.

This sequence belongs to the IspH family. [4Fe-4S] cluster is required as a cofactor.

The catalysed reaction is isopentenyl diphosphate + 2 oxidized [2Fe-2S]-[ferredoxin] + H2O = (2E)-4-hydroxy-3-methylbut-2-enyl diphosphate + 2 reduced [2Fe-2S]-[ferredoxin] + 2 H(+). It carries out the reaction dimethylallyl diphosphate + 2 oxidized [2Fe-2S]-[ferredoxin] + H2O = (2E)-4-hydroxy-3-methylbut-2-enyl diphosphate + 2 reduced [2Fe-2S]-[ferredoxin] + 2 H(+). It participates in isoprenoid biosynthesis; dimethylallyl diphosphate biosynthesis; dimethylallyl diphosphate from (2E)-4-hydroxy-3-methylbutenyl diphosphate: step 1/1. Its pathway is isoprenoid biosynthesis; isopentenyl diphosphate biosynthesis via DXP pathway; isopentenyl diphosphate from 1-deoxy-D-xylulose 5-phosphate: step 6/6. In terms of biological role, catalyzes the conversion of 1-hydroxy-2-methyl-2-(E)-butenyl 4-diphosphate (HMBPP) into a mixture of isopentenyl diphosphate (IPP) and dimethylallyl diphosphate (DMAPP). Acts in the terminal step of the DOXP/MEP pathway for isoprenoid precursor biosynthesis. The chain is 4-hydroxy-3-methylbut-2-enyl diphosphate reductase from Leptospira interrogans serogroup Icterohaemorrhagiae serovar copenhageni (strain Fiocruz L1-130).